The primary structure comprises 290 residues: Homeobox protein HMX3-B (290 aa).

2 disordered regions span residues methionine 1 to lysine 41 and glutamate 96 to threonine 169. A compositionally biased stretch (basic and acidic residues) spans leucine 107–glutamate 124. Acidic residues predominate over residues serine 125–alanine 137. The span at glutamate 138 to lysine 162 shows a compositional bias: basic and acidic residues. Positions lysine 166 to leucine 225 form a DNA-binding region, homeobox.

The protein belongs to the HMX homeobox family. Expressed in the ear placode and vesicle and in cells forming the vestibulo-acoustic ganglion.

The protein localises to the nucleus. Functionally, transcription factor involved in specification of neuronal cell types and which is required for inner ear and hypothalamus development. Binds to the 5'-CAAGTG-3' core sequence. This Oryzias latipes (Japanese rice fish) protein is Homeobox protein HMX3-B (hmx3b).